The following is a 1066-amino-acid chain: Allene oxide synthase-lipoxygenase protein (1066 aa).

Residues 1-371 are allene oxide synthase; sequence MTWKNFGFEI…LKIGSLVPAG (371 aa). Tyr-353 lines the heme pocket. The segment at 372-1066 is arachidonate 8-lipoxygenase; that stretch reads QNAIYNVEVE…PERIPNGTAI (695 aa). Residues 374–490 form the PLAT domain; sequence AIYNVEVETG…KDMVLFPGEA (117 aa). Ca(2+)-binding residues include His-387, Gly-389, Thr-390, Asp-391, Asn-416, Asp-417, Glu-419, Asp-452, and Asp-454. Residues 491-1066 form the Lipoxygenase domain; sequence TLPFNEVPAI…PERIPNGTAI (576 aa). Residues His-757, His-762, His-943, Asn-947, and Ile-1066 each coordinate Fe cation.

It in the C-terminal section; belongs to the lipoxygenase family. Dimer. Ca(2+) serves as cofactor. It depends on Fe cation as a cofactor. Heme is required as a cofactor.

It is found in the cytoplasm. Its subcellular location is the membrane. It catalyses the reaction (5Z,8Z,11Z,14Z)-eicosatetraenoate + O2 = (8R)-hydroperoxy-(5Z,9E,11Z,14Z)-eicosatetraenoate. It carries out the reaction (8R)-hydroperoxy-(5Z,9E,11Z,14Z)-eicosatetraenoate = 8,9-epoxy-(5Z,9E,11Z,14Z)-eicosatetraenoate + H2O. The enzyme catalyses (5Z,8Z,11Z,14Z,17Z)-eicosapentaenoate + O2 = (8R)-hydroperoxy-(5Z,9E,11Z,14Z,17Z)-eicosapentaenoate. The catalysed reaction is (4Z,7Z,10Z,13Z,16Z,19Z)-docosahexaenoate + O2 = 10-hydroperoxy-(4Z,7Z,11E,13Z,16Z,19Z)-docosahexaenoate. It catalyses the reaction (8Z,11Z,14Z)-eicosatrienoate + O2 = (8R)-hydroperoxy-(9E,11Z,14Z)-eicosatrienoate. It carries out the reaction (8Z,11Z,14Z)-eicosatrienoate + O2 = 10-hydroperoxy-(8Z,11Z,14Z)-eicosatrienoate. The enzyme catalyses (8Z,11Z,14Z)-eicosatrienoate + O2 = 11-hydroperoxy-(8Z,12E,14Z)-eicosatrienoate. The protein operates within lipid metabolism; arachidonate metabolism. It functions in the pathway lipid metabolism; fatty acid metabolism. Its activity is regulated as follows. Lipoxygenase activity is stimulated by calcium, sodium, lithium and potassium ions. Calcium binding promotes interaction with membranes and thus facilitates access to substrates. Functionally, bifunctional enzyme which is responsible for allene oxide biosynthesis via a two-step reaction; first the lipoxygenase reaction that converts polyunsaturated fatty acids such as arachidonate ((5Z,8Z,11Z,14Z)-eicosatetraenoate) into a (8R)-hydroperoxide intermediate ((8R)-hydroperoxy-(5Z,9E,11Z,14Z)-eicosatetraenoate) followed by the allene oxide synthase reaction that converts the hydroperoxide intermediate ((8R)-hydroperoxy-(5Z,9E,11Z,14Z)-eicosatetraenoate) into the allene oxide (8,9-epoxy-(5Z,9E,11Z,14Z)-eicosatetraenoate). Shows preference for C20 or C22 highly polyunsaturated fatty acids and no activity with C18 fatty acids in vitro. Fatty acid allene oxides are intermediates in the formation of cyclopentenones or hydrolytic products in marine systems, most notably the prostanoid-related clavulones. The sequence is that of Allene oxide synthase-lipoxygenase protein from Plexaura homomalla (Black sea rod).